A 161-amino-acid polypeptide reads, in one-letter code: Cyclic pyranopterin monophosphate synthase (161 aa).

Residues 75 to 77 (LCH) and 113 to 114 (ME) each bind substrate. Residue D128 is part of the active site.

The protein belongs to the MoaC family. As to quaternary structure, homohexamer; trimer of dimers.

It catalyses the reaction (8S)-3',8-cyclo-7,8-dihydroguanosine 5'-triphosphate = cyclic pyranopterin phosphate + diphosphate. It participates in cofactor biosynthesis; molybdopterin biosynthesis. Its function is as follows. Catalyzes the conversion of (8S)-3',8-cyclo-7,8-dihydroguanosine 5'-triphosphate to cyclic pyranopterin monophosphate (cPMP). This chain is Cyclic pyranopterin monophosphate synthase, found in Methylobacillus flagellatus (strain ATCC 51484 / DSM 6875 / VKM B-1610 / KT).